The primary structure comprises 638 residues: uncharacterized protein (638 aa).

The 138-residue stretch at 1–138 folds into the CID domain; sequence MDLVELDYLS…KIENALLKYK (138 aa). 2 disordered regions span residues 318-338 and 615-638; these read QPPL…YSLS and LGKR…QESK.

This is an uncharacterized protein from Schizosaccharomyces pombe (strain 972 / ATCC 24843) (Fission yeast).